Here is an 816-residue protein sequence, read N- to C-terminus: Fibroblast growth factor receptor (816 aa).

The first 19 residues, 1–19 (MISDWCVVLVLLMSRLVFG), serve as a signal peptide directing secretion. The Extracellular portion of the chain corresponds to 20–370 (LNFTEPVNYI…YKEESVEKTV (351 aa)). N-linked (GlcNAc...) asparagine glycosylation is found at asparagine 21, asparagine 69, asparagine 119, asparagine 156, asparagine 171, asparagine 244, asparagine 274, asparagine 313, and asparagine 321. The region spanning 25 to 105 (PVNYILKLGE…VTAMNEESVQ (81 aa)) is the Ig-like C2-type 1 domain. Cysteine 43 and cysteine 94 are oxidised to a cystine. The Ig-like C2-type 2 domain occupies 126-217 (LRIKNDISLL…GKIEHIMTVE (92 aa)). Cysteine 147 and cysteine 201 form a disulfide bridge. Residues 371-391 (IFIVITSMLAGLIFVAFVIFF) form a helical membrane-spanning segment. The Cytoplasmic portion of the chain corresponds to 392 to 816 (ICRVRSKDKF…DILLSHYAVS (425 aa)). Positions 474-747 (LETDCLLGEG…QLIEDLERML (274 aa)) constitute a Protein kinase domain. ATP is bound by residues 480–488 (LGEGAFGRV) and lysine 508. Aspartate 612 functions as the Proton acceptor in the catalytic mechanism. Tyrosine 643 carries the post-translational modification Phosphotyrosine; by autocatalysis.

It belongs to the protein kinase superfamily. Tyr protein kinase family. Fibroblast growth factor receptor subfamily.

The protein resides in the membrane. It catalyses the reaction L-tyrosyl-[protein] + ATP = O-phospho-L-tyrosyl-[protein] + ADP + H(+). Receptor for basic fibroblast growth factor. The chain is Fibroblast growth factor receptor (FGFR) from Hydra vulgaris (Hydra).